Reading from the N-terminus, the 328-residue chain is D-cysteine desulfhydrase (328 aa).

The residue at position 51 (lysine 51) is an N6-(pyridoxal phosphate)lysine.

The protein belongs to the ACC deaminase/D-cysteine desulfhydrase family. In terms of assembly, homodimer. It depends on pyridoxal 5'-phosphate as a cofactor.

It catalyses the reaction D-cysteine + H2O = hydrogen sulfide + pyruvate + NH4(+) + H(+). Its function is as follows. Catalyzes the alpha,beta-elimination reaction of D-cysteine and of several D-cysteine derivatives. It could be a defense mechanism against D-cysteine. In Escherichia coli O9:H4 (strain HS), this protein is D-cysteine desulfhydrase.